A 456-amino-acid chain; its full sequence is Bifunctional protein GlmU (456 aa).

The pyrophosphorylase stretch occupies residues Met-1–Arg-229. Residues Leu-11–Gly-14, Lys-25, Gln-76, Gly-81–Thr-82, Tyr-103–Asp-105, Gly-140, Glu-154, Asn-169, and Asn-227 contribute to the UDP-N-acetyl-alpha-D-glucosamine site. A Mg(2+)-binding site is contributed by Asp-105. Asn-227 is a Mg(2+) binding site. A linker region spans residues Leu-230 to Ser-250. Positions Gly-251–Lys-456 are N-acetyltransferase. 2 residues coordinate UDP-N-acetyl-alpha-D-glucosamine: Arg-333 and Lys-351. The active-site Proton acceptor is the His-363. Residues Tyr-366 and Asn-377 each contribute to the UDP-N-acetyl-alpha-D-glucosamine site. Residues Ala-380, Asn-386–Tyr-387, Ser-405, Ala-423, and Arg-440 contribute to the acetyl-CoA site.

It in the N-terminal section; belongs to the N-acetylglucosamine-1-phosphate uridyltransferase family. This sequence in the C-terminal section; belongs to the transferase hexapeptide repeat family. Homotrimer. Requires Mg(2+) as cofactor.

It localises to the cytoplasm. The catalysed reaction is alpha-D-glucosamine 1-phosphate + acetyl-CoA = N-acetyl-alpha-D-glucosamine 1-phosphate + CoA + H(+). It catalyses the reaction N-acetyl-alpha-D-glucosamine 1-phosphate + UTP + H(+) = UDP-N-acetyl-alpha-D-glucosamine + diphosphate. Its pathway is nucleotide-sugar biosynthesis; UDP-N-acetyl-alpha-D-glucosamine biosynthesis; N-acetyl-alpha-D-glucosamine 1-phosphate from alpha-D-glucosamine 6-phosphate (route II): step 2/2. The protein operates within nucleotide-sugar biosynthesis; UDP-N-acetyl-alpha-D-glucosamine biosynthesis; UDP-N-acetyl-alpha-D-glucosamine from N-acetyl-alpha-D-glucosamine 1-phosphate: step 1/1. It participates in bacterial outer membrane biogenesis; LPS lipid A biosynthesis. Its function is as follows. Catalyzes the last two sequential reactions in the de novo biosynthetic pathway for UDP-N-acetylglucosamine (UDP-GlcNAc). The C-terminal domain catalyzes the transfer of acetyl group from acetyl coenzyme A to glucosamine-1-phosphate (GlcN-1-P) to produce N-acetylglucosamine-1-phosphate (GlcNAc-1-P), which is converted into UDP-GlcNAc by the transfer of uridine 5-monophosphate (from uridine 5-triphosphate), a reaction catalyzed by the N-terminal domain. The protein is Bifunctional protein GlmU of Erwinia tasmaniensis (strain DSM 17950 / CFBP 7177 / CIP 109463 / NCPPB 4357 / Et1/99).